We begin with the raw amino-acid sequence, 161 residues long: 18.1 kDa class I heat shock protein (161 aa).

The 115-residue stretch at 47–161 folds into the sHSP domain; the sequence is ETAAFAGARI…PDVKSIQVTG (115 aa).

The protein belongs to the small heat shock protein (HSP20) family. May form oligomeric structures.

Its subcellular location is the cytoplasm. The polypeptide is 18.1 kDa class I heat shock protein (HSP18.1) (Oryza sativa subsp. japonica (Rice)).